An 894-amino-acid polypeptide reads, in one-letter code: Mitogen-activated protein kinase kinase kinase kinase 3 (894 aa).

Methionine 1 carries the N-acetylmethionine modification. The Protein kinase domain maps to 16–273 (FELIQRIGSG…AEKLLQHPFV (258 aa)). Residues 22 to 30 (IGSGTYGDV), lysine 45, and lysine 48 each bind ATP. Aspartate 136 (proton acceptor) is an active-site residue. Phosphoserine occurs at positions 329 and 398. Residues 410-536 (AHLEDDEGDD…DVPKPISNGL (127 aa)) are disordered. Residues 473–487 (QVPPRPPPPRLPPHK) show a composition bias toward pro residues. Residues 513–529 (NEHRGTNLSRKEKKDVP) are compositionally biased toward basic and acidic residues. The region spanning 556-867 (PLKIHCASSW…IFRLLGSDRV (312 aa)) is the CNH domain.

Belongs to the protein kinase superfamily. STE Ser/Thr protein kinase family. STE20 subfamily. As to quaternary structure, interacts with SH3GL2. Interaction appears to regulate MAP4K3-mediated JNK activation. Requires Mg(2+) as cofactor. In terms of tissue distribution, ubiquitously expressed in all tissues examined, with high levels in heart, brain, placenta, skeletal muscle, kidney and pancreas and lower levels in lung and liver.

The catalysed reaction is L-seryl-[protein] + ATP = O-phospho-L-seryl-[protein] + ADP + H(+). The enzyme catalyses L-threonyl-[protein] + ATP = O-phospho-L-threonyl-[protein] + ADP + H(+). In terms of biological role, serine/threonine kinase that plays a role in the response to environmental stress. Appears to act upstream of the JUN N-terminal pathway. Activator of the Hippo signaling pathway which plays a pivotal role in organ size control and tumor suppression by restricting proliferation and promoting apoptosis. MAP4Ks act in parallel to and are partially redundant with STK3/MST2 and STK4/MST2 in the phosphorylation and activation of LATS1/2, and establish MAP4Ks as components of the expanded Hippo pathway. In Homo sapiens (Human), this protein is Mitogen-activated protein kinase kinase kinase kinase 3.